The primary structure comprises 532 residues: O-phosphoserine--tRNA(Cys) ligase (532 aa).

Substrate contacts are provided by residues histidine 188 to threonine 190, serine 233 to serine 235, tyrosine 275 to tyrosine 276, and asparagine 327.

This sequence belongs to the class-II aminoacyl-tRNA synthetase family. O-phosphoseryl-tRNA(Cys) synthetase subfamily. Homotetramer. Interacts with SepCysS.

It carries out the reaction tRNA(Cys) + O-phospho-L-serine + ATP = O-phospho-L-seryl-tRNA(Cys) + AMP + diphosphate. Catalyzes the attachment of O-phosphoserine (Sep) to tRNA(Cys). This is O-phosphoserine--tRNA(Cys) ligase from Methanocella arvoryzae (strain DSM 22066 / NBRC 105507 / MRE50).